The primary structure comprises 419 residues: Enolase (419 aa).

Gln161 is a (2R)-2-phosphoglycerate binding site. The Proton donor role is filled by Glu205. Mg(2+) is bound by residues Asp240, Glu283, and Asp309. The (2R)-2-phosphoglycerate site is built by Lys334, Arg363, Ser364, and Lys385. The active-site Proton acceptor is the Lys334.

Belongs to the enolase family. The cofactor is Mg(2+).

The protein resides in the cytoplasm. It localises to the secreted. It is found in the cell surface. It carries out the reaction (2R)-2-phosphoglycerate = phosphoenolpyruvate + H2O. It participates in carbohydrate degradation; glycolysis; pyruvate from D-glyceraldehyde 3-phosphate: step 4/5. In terms of biological role, catalyzes the reversible conversion of 2-phosphoglycerate (2-PG) into phosphoenolpyruvate (PEP). It is essential for the degradation of carbohydrates via glycolysis. The protein is Enolase of Saccharolobus islandicus (strain L.S.2.15 / Lassen #1) (Sulfolobus islandicus).